Reading from the N-terminus, the 116-residue chain is U11-theraphotoxin-Hhn1c (116 aa).

The signal sequence occupies residues Met1–Ala21. A propeptide spanning residues Asp22–Arg74 is cleaved from the precursor. Residues Glu61–Asp83 are disordered. 3 disulfide bridges follow: Cys75-Cys90, Cys82-Cys95, and Cys89-Cys110.

The protein belongs to the neurotoxin 14 (magi-1) family. 01 (HNTX-16) subfamily. Expressed by the venom gland.

Its subcellular location is the secreted. Functionally, probable ion channel inhibitor. The sequence is that of U11-theraphotoxin-Hhn1c from Cyriopagopus hainanus (Chinese bird spider).